The following is a 293-amino-acid chain: Energy-coupling factor transporter ATP-binding protein EcfA2 (293 aa).

An ABC transporter domain is found at Ile3–Asp246. Gly40–Ser47 contacts ATP.

This sequence belongs to the ABC transporter superfamily. Energy-coupling factor EcfA family. As to quaternary structure, forms a stable energy-coupling factor (ECF) transporter complex composed of 2 membrane-embedded substrate-binding proteins (S component), 2 ATP-binding proteins (A component) and 2 transmembrane proteins (T component).

The protein resides in the cell membrane. ATP-binding (A) component of a common energy-coupling factor (ECF) ABC-transporter complex. Unlike classic ABC transporters this ECF transporter provides the energy necessary to transport a number of different substrates. This is Energy-coupling factor transporter ATP-binding protein EcfA2 from Bacillus cereus (strain ATCC 14579 / DSM 31 / CCUG 7414 / JCM 2152 / NBRC 15305 / NCIMB 9373 / NCTC 2599 / NRRL B-3711).